The sequence spans 236 residues: Thymidylate kinase (236 aa).

9–16 is an ATP binding site; that stretch reads GPEGSGKS.

It belongs to the thymidylate kinase family.

The enzyme catalyses dTMP + ATP = dTDP + ADP. In terms of biological role, phosphorylation of dTMP to form dTDP in both de novo and salvage pathways of dTTP synthesis. This Herpetosiphon aurantiacus (strain ATCC 23779 / DSM 785 / 114-95) protein is Thymidylate kinase.